A 238-amino-acid polypeptide reads, in one-letter code: Chromosome partition protein MukE (238 aa).

It belongs to the MukE family. Interacts, and probably forms a ternary complex, with MukF and MukB. The complex formation is stimulated by calcium or magnesium.

The protein localises to the cytoplasm. It localises to the nucleoid. Its function is as follows. Involved in chromosome condensation, segregation and cell cycle progression. May participate in facilitating chromosome segregation by condensation DNA from both sides of a centrally located replisome during cell division. Probably acts via its interaction with MukB and MukF. This is Chromosome partition protein MukE from Haemophilus ducreyi (strain 35000HP / ATCC 700724).